The primary structure comprises 273 residues: Imidazole glycerol phosphate synthase subunit HisF (273 aa).

Residues aspartate 11 and aspartate 134 contribute to the active site.

Belongs to the HisA/HisF family. Heterodimer of HisH and HisF.

It is found in the cytoplasm. It catalyses the reaction 5-[(5-phospho-1-deoxy-D-ribulos-1-ylimino)methylamino]-1-(5-phospho-beta-D-ribosyl)imidazole-4-carboxamide + L-glutamine = D-erythro-1-(imidazol-4-yl)glycerol 3-phosphate + 5-amino-1-(5-phospho-beta-D-ribosyl)imidazole-4-carboxamide + L-glutamate + H(+). Its pathway is amino-acid biosynthesis; L-histidine biosynthesis; L-histidine from 5-phospho-alpha-D-ribose 1-diphosphate: step 5/9. IGPS catalyzes the conversion of PRFAR and glutamine to IGP, AICAR and glutamate. The HisF subunit catalyzes the cyclization activity that produces IGP and AICAR from PRFAR using the ammonia provided by the HisH subunit. The chain is Imidazole glycerol phosphate synthase subunit HisF from Methanococcoides burtonii (strain DSM 6242 / NBRC 107633 / OCM 468 / ACE-M).